The sequence spans 205 residues: Probable GTP-binding protein EngB (205 aa).

An EngB-type G domain is found at 21 to 196; it reads QVPEVAFAGR…VHEVSKCVKE (176 aa). Residues 29–36, 56–60, 74–77, 141–144, and 172–177 contribute to the GTP site; these read GRSNVGKS, GSTRQ, DLPG, TKID, and IIGTSS. Serine 36 and threonine 58 together coordinate Mg(2+).

This sequence belongs to the TRAFAC class TrmE-Era-EngA-EngB-Septin-like GTPase superfamily. EngB GTPase family. Mg(2+) is required as a cofactor.

Necessary for normal cell division and for the maintenance of normal septation. In Anaplasma marginale (strain Florida), this protein is Probable GTP-binding protein EngB.